We begin with the raw amino-acid sequence, 515 residues long: Histidine ammonia-lyase (515 aa).

The 5-imidazolinone (Ala-Gly) cross-link spans 142-144 (ASG). Serine 143 carries the 2,3-didehydroalanine (Ser) modification.

It belongs to the PAL/histidase family. In terms of processing, contains an active site 4-methylidene-imidazol-5-one (MIO), which is formed autocatalytically by cyclization and dehydration of residues Ala-Ser-Gly.

It is found in the cytoplasm. It carries out the reaction L-histidine = trans-urocanate + NH4(+). It functions in the pathway amino-acid degradation; L-histidine degradation into L-glutamate; N-formimidoyl-L-glutamate from L-histidine: step 1/3. The protein is Histidine ammonia-lyase of Methylobacterium nodulans (strain LMG 21967 / CNCM I-2342 / ORS 2060).